A 595-amino-acid polypeptide reads, in one-letter code: Aspartate--tRNA(Asp/Asn) ligase (595 aa).

E171 is an L-aspartate binding site. An aspartate region spans residues 195–198 (QLFK). Residue R217 participates in L-aspartate binding. ATP is bound by residues 217 to 219 (RDE) and Q226. H454 is an L-aspartate binding site. E488 provides a ligand contact to ATP. R495 provides a ligand contact to L-aspartate. Residue 540–543 (GLDR) participates in ATP binding.

The protein belongs to the class-II aminoacyl-tRNA synthetase family. Type 1 subfamily. As to quaternary structure, homodimer.

Its subcellular location is the cytoplasm. It carries out the reaction tRNA(Asx) + L-aspartate + ATP = L-aspartyl-tRNA(Asx) + AMP + diphosphate. Aspartyl-tRNA synthetase with relaxed tRNA specificity since it is able to aspartylate not only its cognate tRNA(Asp) but also tRNA(Asn). Reaction proceeds in two steps: L-aspartate is first activated by ATP to form Asp-AMP and then transferred to the acceptor end of tRNA(Asp/Asn). The sequence is that of Aspartate--tRNA(Asp/Asn) ligase from Bordetella petrii (strain ATCC BAA-461 / DSM 12804 / CCUG 43448).